A 203-amino-acid polypeptide reads, in one-letter code: FMN-dependent NADH:quinone oxidoreductase 3 (203 aa).

FMN is bound by residues Ser-9, 15 to 17 (SAS), 95 to 98 (MYNF), and 139 to 142 (TAGG).

The protein belongs to the azoreductase type 1 family. In terms of assembly, homodimer. Requires FMN as cofactor.

The catalysed reaction is 2 a quinone + NADH + H(+) = 2 a 1,4-benzosemiquinone + NAD(+). It carries out the reaction N,N-dimethyl-1,4-phenylenediamine + anthranilate + 2 NAD(+) = 2-(4-dimethylaminophenyl)diazenylbenzoate + 2 NADH + 2 H(+). Its function is as follows. Quinone reductase that provides resistance to thiol-specific stress caused by electrophilic quinones. In terms of biological role, also exhibits azoreductase activity. Catalyzes the reductive cleavage of the azo bond in aromatic azo compounds to the corresponding amines. In Pseudomonas fluorescens (strain Pf0-1), this protein is FMN-dependent NADH:quinone oxidoreductase 3.